Consider the following 100-residue polypeptide: Carboxysome shell vertex protein CcmL (100 aa).

Residues 1–83 (MQIGRVRGTV…VDAVVIGIID (83 aa)) enclose the BMV domain.

Belongs to the CcmL/EutN family. CcmL subfamily. In terms of assembly, homopentamer. Interacts with full-length CcmM.

It is found in the carboxysome. In terms of biological role, probably forms vertices in the carboxysome, a polyhedral inclusion where RuBisCO (ribulose bisphosphate carboxylase, rbcL-rbcS) is sequestered. Has been modeled to induce curvature upon insertion into an otherwise flat hexagonal molecular layer of CcmK subunits. This is Carboxysome shell vertex protein CcmL from Gloeobacter violaceus (strain ATCC 29082 / PCC 7421).